Here is a 499-residue protein sequence, read N- to C-terminus: Cytochrome P450 705A12 (499 aa).

Residues 4–24 traverse the membrane as a helical segment; it reads LIIVDFQNISIFILLCLFSFL. Position 439 (Cys439) interacts with heme.

This sequence belongs to the cytochrome P450 family. It depends on heme as a cofactor.

It localises to the membrane. In terms of biological role, may be involved in hydroxylation of the triterpene marneral. The sequence is that of Cytochrome P450 705A12 from Arabidopsis thaliana (Mouse-ear cress).